The primary structure comprises 433 residues: Adenylyltransferase and sulfurtransferase UBA4 (433 aa).

ATP-binding positions include Gly-70, Asp-91, 98 to 102 (SNLHR), Lys-115, and 159 to 160 (DT). 2 residues coordinate Zn(2+): Cys-201 and Cys-204. Cys-218 acts as the Glycyl thioester intermediate; for adenylyltransferase activity in catalysis. Zn(2+) contacts are provided by Cys-279 and Cys-282. Residues 332 to 431 (SGNNKVLLDV…YIDDVDQSIP (100 aa)) enclose the Rhodanese domain. Cys-390 acts as the Cysteine persulfide intermediate; for sulfurtransferase activity in catalysis.

In the N-terminal section; belongs to the HesA/MoeB/ThiF family. UBA4 subfamily. Zn(2+) is required as a cofactor.

The protein localises to the cytoplasm. Its subcellular location is the cytosol. The protein operates within tRNA modification; 5-methoxycarbonylmethyl-2-thiouridine-tRNA biosynthesis. Plays a central role in 2-thiolation of mcm(5)S(2)U at tRNA wobble positions of cytosolic tRNA(Lys), tRNA(Glu) and tRNA(Gln). Acts by mediating the C-terminal thiocarboxylation of sulfur carrier URM1. Its N-terminus first activates URM1 as acyl-adenylate (-COAMP), then the persulfide sulfur on the catalytic cysteine is transferred to URM1 to form thiocarboxylation (-COSH) of its C-terminus. The reaction probably involves hydrogen sulfide that is generated from the persulfide intermediate and that acts as a nucleophile towards URM1. Subsequently, a transient disulfide bond is formed. Does not use thiosulfate as sulfur donor; NFS1 probably acting as a sulfur donor for thiocarboxylation reactions. Prior mcm(5) tRNA modification by the elongator complex is required for 2-thiolation. May also be involved in protein urmylation. The chain is Adenylyltransferase and sulfurtransferase UBA4 from Candida glabrata (strain ATCC 2001 / BCRC 20586 / JCM 3761 / NBRC 0622 / NRRL Y-65 / CBS 138) (Yeast).